A 542-amino-acid polypeptide reads, in one-letter code: MFS-type efflux pump MMF1 (542 aa).

The next 8 helical transmembrane spans lie at 24 to 44, 51 to 71, 98 to 118, 124 to 144, 151 to 171, 179 to 199, 215 to 235, and 248 to 268; these read WTIF…MTMI, IVAA…AFLL, VIFL…VLVV, GLGG…LTTL, FGLI…LGGV, WIFW…VLFL, LDLV…IAVT, and VWVP…VEWI. The N-linked (GlcNAc...) asparagine glycan is linked to N285. Helical transmembrane passes span 296 to 316, 326 to 346, 355 to 375, 384 to 404, 419 to 439, and 490 to 510; these read FLHG…FQAI, IWSF…GLLI, LIFI…HWSV, ISQI…LPPI, AYAF…TTIF, and ISDS…STFL.

The protein belongs to the major facilitator superfamily.

It is found in the cell membrane. Glycosyltransferase; part of the gene cluster that mediates the biosynthesis of mannosylerythritol lipids (MELs), surface-active substances that enhance the availability of water-insoluble substrates. MMF1 is directly involved in the secretiopn of MALs. This chain is MFS-type efflux pump MMF1, found in Pseudozyma antarctica (strain T-34) (Yeast).